We begin with the raw amino-acid sequence, 1101 residues long: Helicase POLQ-like (1101 aa).

Residues 212-261 form a disordered region; sequence DLGDHSMKERDWKSSSHNTVNEELPHNCIEQPQQNDESSSKVRTSSDMNR. A compositionally biased stretch (basic and acidic residues) spans 213–225; it reads LGDHSMKERDWKS. The segment covering 241 to 258 has biased composition (polar residues); it reads EQPQQNDESSSKVRTSSD. A Helicase ATP-binding domain is found at 346–518; the sequence is LNSVQERKNL…FLQAEYYTSQ (173 aa). 359–366 serves as a coordination point for ATP; the sequence is LPTSGGKT. Residues 463 to 466 carry the DEAH box motif; the sequence is DELH. The Helicase C-terminal domain occupies 566-758; that stretch reads HLVALVTEVI…EFTKGIQTLF (193 aa).

The protein belongs to the helicase family. SKI2 subfamily. Homodimer. Interacts with POLN. Interacts with RAD51B and RAD51C; promoting association with the BCDX2 complex. Interacts with the replication protein A (RPA/RP-A) complex. Interacts with RAD51; stimulating HELQ DNA helicase activity and ability to unwing DNA.

Its subcellular location is the nucleus. It localises to the chromosome. The catalysed reaction is Couples ATP hydrolysis with the unwinding of duplex DNA by translocating in the 3'-5' direction.. It carries out the reaction ATP + H2O = ADP + phosphate + H(+). With respect to regulation, ATPase activity is strongly stimulated by single-stranded DNA. Presence of ATP and Mg cofactor are required for helicase activity allowing to unwind duplex oligonucleotides up to 60-70-mer. This helicase activity is stimulated by replication protein A (RPA/RP-A) complex that binds to unwound regions and inhibits re-annealing. Its function is as follows. Single-stranded 3'-5' DNA helicase that plays a key role in homology-driven double-strand break (DSB) repair. Involved in different DSB repair mechanisms that are guided by annealing of extensive stretches of complementary bases at break ends, such as microhomology-mediated end-joining (MMEJ), single-strand annealing (SSA) or synthesis-dependent strand annealing (SDSA). Possesses both DNA unwinding and annealing activities. Forms a complex with RAD51, stimulating HELQ DNA helicase activity and ability to unwing DNA. Efficiently unwinds substrates containing 3' overhangs or a D-loop. In contrast, interaction with the replication protein A (RPA/RP-A) complex inhibits DNA unwinding by HELQ but strongly stimulates DNA strand annealing. Triggers displacement of RPA from single-stranded DNA to facilitate annealing of complementary sequences. In Homo sapiens (Human), this protein is Helicase POLQ-like.